A 123-amino-acid polypeptide reads, in one-letter code: Small ribosomal subunit protein uS12 (123 aa).

Asp-89 is subject to 3-methylthioaspartic acid.

The protein belongs to the universal ribosomal protein uS12 family. In terms of assembly, part of the 30S ribosomal subunit. Contacts proteins S8 and S17. May interact with IF1 in the 30S initiation complex.

With S4 and S5 plays an important role in translational accuracy. Its function is as follows. Interacts with and stabilizes bases of the 16S rRNA that are involved in tRNA selection in the A site and with the mRNA backbone. Located at the interface of the 30S and 50S subunits, it traverses the body of the 30S subunit contacting proteins on the other side and probably holding the rRNA structure together. The combined cluster of proteins S8, S12 and S17 appears to hold together the shoulder and platform of the 30S subunit. This is Small ribosomal subunit protein uS12 from Acidiphilium cryptum (strain JF-5).